A 67-amino-acid polypeptide reads, in one-letter code: Alpha-toxin Cn12 (67 aa).

Residues 1-66 (RDGYPLASNG…WGDSGTGPCR (66 aa)) form the LCN-type CS-alpha/beta domain. Disulfide bonds link Cys11–Cys65, Cys15–Cys40, Cys25–Cys45, and Cys29–Cys47.

In terms of tissue distribution, expressed by the venom gland.

It localises to the secreted. Alpha toxins bind voltage-independently at site-3 of sodium channels (Nav) and inhibit the inactivation of the activated channels, thereby blocking neuronal transmission. This toxin binds, in vitro, to sodium channels and inhibits the inactivation of the activated channels. Seems not toxic to mice, crickets and sweet-water shrimps. This is Alpha-toxin Cn12 from Centruroides noxius (Mexican scorpion).